The chain runs to 411 residues: Dual-specificity RNA methyltransferase RlmN (411 aa).

E125 acts as the Proton acceptor in catalysis. Positions 131–380 constitute a Radical SAM core domain; it reads EEGRGTLCVS…IRTPRGRDIL (250 aa). A disulfide bridge links C138 with C383. [4Fe-4S] cluster contacts are provided by C145, C149, and C152. S-adenosyl-L-methionine is bound by residues 209-210, S241, 263-265, and N340; these read GE and SLH. C383 acts as the S-methylcysteine intermediate in catalysis.

The protein belongs to the radical SAM superfamily. RlmN family. [4Fe-4S] cluster serves as cofactor.

The protein localises to the cytoplasm. The enzyme catalyses adenosine(2503) in 23S rRNA + 2 reduced [2Fe-2S]-[ferredoxin] + 2 S-adenosyl-L-methionine = 2-methyladenosine(2503) in 23S rRNA + 5'-deoxyadenosine + L-methionine + 2 oxidized [2Fe-2S]-[ferredoxin] + S-adenosyl-L-homocysteine. It catalyses the reaction adenosine(37) in tRNA + 2 reduced [2Fe-2S]-[ferredoxin] + 2 S-adenosyl-L-methionine = 2-methyladenosine(37) in tRNA + 5'-deoxyadenosine + L-methionine + 2 oxidized [2Fe-2S]-[ferredoxin] + S-adenosyl-L-homocysteine. Its function is as follows. Specifically methylates position 2 of adenine 2503 in 23S rRNA and position 2 of adenine 37 in tRNAs. m2A2503 modification seems to play a crucial role in the proofreading step occurring at the peptidyl transferase center and thus would serve to optimize ribosomal fidelity. In Brucella anthropi (strain ATCC 49188 / DSM 6882 / CCUG 24695 / JCM 21032 / LMG 3331 / NBRC 15819 / NCTC 12168 / Alc 37) (Ochrobactrum anthropi), this protein is Dual-specificity RNA methyltransferase RlmN.